Consider the following 306-residue polypeptide: MAMAITAKMVAELRAKTDAPMMECKKALTEAEGDFEKAEELLRVKLGSKAGKAASRVTAEGVVTLARDGDDVALVEINCETDFVTKNDSFLAFANAVAEGVVKNNPADLAALGAMPLAMDSFGPTVEDVRRGLIGKIGENMTVRRFKRFASGKAASYLHGTRIGVVVEFEGDEAAAKDVAMHVAAMKPVALSSADVPAELVAKERSVAAAKAAEDASVAQAAGKPVQSAEIVAKRIEGGVQKYLKEVSLNNQTFVKNDKQTVEQMLKEKATVIKSFTLYIVGEGIEKKVDDFAAEVAAQVAAAKGA.

Residues T81–V84 form an involved in Mg(2+) ion dislocation from EF-Tu region.

The protein belongs to the EF-Ts family.

Its subcellular location is the cytoplasm. Functionally, associates with the EF-Tu.GDP complex and induces the exchange of GDP to GTP. It remains bound to the aminoacyl-tRNA.EF-Tu.GTP complex up to the GTP hydrolysis stage on the ribosome. In Polaromonas naphthalenivorans (strain CJ2), this protein is Elongation factor Ts.